Reading from the N-terminus, the 428-residue chain is Ribulose bisphosphate carboxylase (428 aa).

The Proton acceptor role is filled by lysine 151. Lysine 153 contacts substrate. The Mg(2+) site is built by lysine 177, aspartate 179, and glutamate 180. Residue lysine 177 is modified to N6-carboxylysine. Residue histidine 270 is the Proton acceptor of the active site. Substrate is bound by residues arginine 271, histidine 303, 354 to 356 (SGG), and 376 to 379 (QFGG).

The protein belongs to the RuBisCO large chain family. Type III subfamily. As to quaternary structure, homodimer or homodecamer. In contrast to form I RuBisCO, the form III RuBisCO is composed solely of large subunits. Mg(2+) serves as cofactor.

It carries out the reaction 2 (2R)-3-phosphoglycerate + 2 H(+) = D-ribulose 1,5-bisphosphate + CO2 + H2O. The enzyme catalyses D-ribulose 1,5-bisphosphate + O2 = 2-phosphoglycolate + (2R)-3-phosphoglycerate + 2 H(+). Functionally, catalyzes the addition of molecular CO(2) and H(2)O to ribulose 1,5-bisphosphate (RuBP), generating two molecules of 3-phosphoglycerate (3-PGA). Functions in an archaeal AMP degradation pathway, together with AMP phosphorylase and R15P isomerase. This chain is Ribulose bisphosphate carboxylase, found in Methanosarcina mazei (strain ATCC BAA-159 / DSM 3647 / Goe1 / Go1 / JCM 11833 / OCM 88) (Methanosarcina frisia).